The sequence spans 83 residues: Bublin coiled-coil protein (83 aa).

The segment at 1–25 is disordered; it reads MSGPNGDLGMPVDAGTEGENDSFGE. The stretch at 25–74 forms a coiled coil; sequence EAEYAAINSMLDQINSCLDHLEEKNDHLHARLQELLESNRQTRLEFQQQL. A Phosphoserine modification is found at serine 82.

Belongs to the UPF0184 (EST00098) family.

It is found in the cell junction. It localises to the cytoplasm. Its subcellular location is the cytoskeleton. Its function is as follows. Essential for intermediate filament organization in intestinal cells, interacts with intermediate filament and regulates intestinal lumen morphology. In Mus musculus (Mouse), this protein is Bublin coiled-coil protein.